The sequence spans 317 residues: Porphobilinogen deaminase (317 aa).

An S-(dipyrrolylmethanemethyl)cysteine modification is found at Cys240.

The protein belongs to the HMBS family. As to quaternary structure, monomer. Dipyrromethane serves as cofactor.

The enzyme catalyses 4 porphobilinogen + H2O = hydroxymethylbilane + 4 NH4(+). The protein operates within porphyrin-containing compound metabolism; protoporphyrin-IX biosynthesis; coproporphyrinogen-III from 5-aminolevulinate: step 2/4. Tetrapolymerization of the monopyrrole PBG into the hydroxymethylbilane pre-uroporphyrinogen in several discrete steps. This chain is Porphobilinogen deaminase, found in Nitratidesulfovibrio vulgaris (strain DSM 19637 / Miyazaki F) (Desulfovibrio vulgaris).